Reading from the N-terminus, the 154-residue chain is Superoxide dismutase [Cu-Zn] (154 aa).

Residues histidine 47, histidine 49, and histidine 64 each coordinate Cu cation. Cysteine 58 and cysteine 147 form a disulfide bridge. Positions 64, 72, 81, and 84 each coordinate Zn(2+). Histidine 121 contacts Cu cation. Residues 124 to 137 (TDDLGRGDSEESKK) show a composition bias toward basic and acidic residues. The interval 124 to 144 (TDDLGRGDSEESKKTGNAGAR) is disordered. Arginine 144 lines the substrate pocket.

This sequence belongs to the Cu-Zn superoxide dismutase family. Homodimer. The cofactor is Cu cation. Zn(2+) serves as cofactor.

The protein resides in the cytoplasm. It carries out the reaction 2 superoxide + 2 H(+) = H2O2 + O2. Functionally, destroys radicals which are normally produced within the cells and which are toxic to biological systems. In Emericella nidulans (strain FGSC A4 / ATCC 38163 / CBS 112.46 / NRRL 194 / M139) (Aspergillus nidulans), this protein is Superoxide dismutase [Cu-Zn] (sodA).